We begin with the raw amino-acid sequence, 276 residues long: Large ribosomal subunit protein uL2 (276 aa).

Disordered stretches follow at residues 30 to 57 and 219 to 276; these read EKSL…QGGG and TVRG…RSKK.

The protein belongs to the universal ribosomal protein uL2 family. As to quaternary structure, part of the 50S ribosomal subunit. Forms a bridge to the 30S subunit in the 70S ribosome.

In terms of biological role, one of the primary rRNA binding proteins. Required for association of the 30S and 50S subunits to form the 70S ribosome, for tRNA binding and peptide bond formation. It has been suggested to have peptidyltransferase activity; this is somewhat controversial. Makes several contacts with the 16S rRNA in the 70S ribosome. This Exiguobacterium sibiricum (strain DSM 17290 / CCUG 55495 / CIP 109462 / JCM 13490 / 255-15) protein is Large ribosomal subunit protein uL2.